The primary structure comprises 3184 residues: Probable serine/threonine-protein kinase pats1 (3184 aa).

A compositionally biased stretch (pro residues) spans 369–378; the sequence is DPPPPPPSNS. 2 disordered regions span residues 369–516 and 913–1013; these read DPPP…QIPP and SITR…TSIL. Positions 379 to 415 are enriched in low complexity; it reads SPPISKSTSNNNLNVSNYHNNNNNNNNSNSNLSNSGN. Positions 421 to 450 are enriched in polar residues; it reads DFQSQNLVKSYNRENSGNSLNSMLHQTSLP. Positions 451 to 512 are enriched in low complexity; it reads NNNNSNVVNN…NNNNSNNNNS (62 aa). One can recognise a Myotubularin phosphatase domain in the interval 842 to 1348; that stretch reads CFPDHSLLQE…FQDTMWNEYF (507 aa). Residues 913 to 934 are compositionally biased toward polar residues; the sequence is SITRATSPEDQNNGSSNYLLTP. Positions 935–993 are enriched in low complexity; that stretch reads NSPNSSSSNLANNNNSNNNNINNNNNNNNNNNNNNNNNSNNNNNNNNNNNNNNNNNNNN. Positions 1000–1013 are enriched in polar residues; sequence SRSTTIDNGQTSIL. LRR repeat units lie at residues 1391–1412, 1416–1438, 1439–1460, 1467–1488, 1491–1512, 1514–1535, 1541–1563, 1564–1585, 1587–1608, 1610–1631, 1633–1654, 1656–1678, and 1680–1701; these read FLET…STLY, GLRE…SSLV, KLEK…TVVL, SLTE…FSMF, SLKK…LGML, NLIE…GVGI, KLCI…GDLK, SLEK…FRQL, NLEE…VCFL, NLKK…ISQL, KLMI…IGQL, QLVS…MGLL, and NLVE…IVSL. Residues 1716–1910 enclose the Roc domain; it reads GQEQCYKMKL…EKLEALVQSQ (195 aa). Residues 1716 to 1910 form a small GTPase-like region; sequence GQEQCYKMKL…EKLEALVQSQ (195 aa). GTP-binding positions include 1729–1736, 1797–1801, and 1854–1857; these read GQENVGKT, DFAGQ, and THLD. Positions 1918-2127 constitute a COR domain; sequence PRSYMLLENL…KCYWKNGMIL (210 aa). Residues 2247-2519 form the Protein kinase domain; it reads LMIEELIGEG…RLIKIAEAMF (273 aa). ATP-binding positions include 2253–2261 and lysine 2274; that span reads IGEGGAALV. The Proton acceptor role is filled by aspartate 2379. 2 disordered regions span residues 2528 to 2609 and 2652 to 2671; these read YQQQ…TISH and NSIN…NSLL. Low complexity predominate over residues 2529-2555; sequence QQQQQQQQQQQQSSPSKSSSTSPIIKS. Residues 2556 to 2576 are compositionally biased toward polar residues; sequence LNLSTVSELGESSNQTPKQNI. WD repeat units follow at residues 2745–2785, 2790–2829, 2909–2947, 2949–2986, and 2990–3040; these read PNQG…KYIQ, ANKD…KIKS, AHER…HTIE, AHSS…LVSE, and KHKD…NSRS. Positions 3055–3126 are enriched in low complexity; that stretch reads GSSNSITNSN…NYYYSNNVNS (72 aa). The interval 3055-3164 is disordered; that stretch reads GSSNSITNSN…TPPGSKGLMQ (110 aa). Over residues 3141 to 3157 the composition is skewed to polar residues; the sequence is HEQTSPNSATPLSSTPP.

The protein belongs to the protein kinase superfamily. TKL Ser/Thr protein kinase family. ROCO subfamily.

The catalysed reaction is L-seryl-[protein] + ATP = O-phospho-L-seryl-[protein] + ADP + H(+). It carries out the reaction L-threonyl-[protein] + ATP = O-phospho-L-threonyl-[protein] + ADP + H(+). May act as a serine/threonine-protein kinase and guanine-nucleotide releasing factor. Essential regulator of cytokinesis involved in the binding to actomyosin cytoskeleton. The polypeptide is Probable serine/threonine-protein kinase pats1 (pats1) (Dictyostelium discoideum (Social amoeba)).